Consider the following 1413-residue polypeptide: DNA-directed RNA polymerase subunit beta' (1413 aa).

Zn(2+) contacts are provided by Cys70, Cys72, Cys85, and Cys88. Residues Asp460, Asp462, and Asp464 each contribute to the Mg(2+) site. Residues Cys814, Cys888, Cys895, and Cys898 each coordinate Zn(2+).

It belongs to the RNA polymerase beta' chain family. As to quaternary structure, the RNAP catalytic core consists of 2 alpha, 1 beta, 1 beta' and 1 omega subunit. When a sigma factor is associated with the core the holoenzyme is formed, which can initiate transcription. Mg(2+) is required as a cofactor. The cofactor is Zn(2+).

It carries out the reaction RNA(n) + a ribonucleoside 5'-triphosphate = RNA(n+1) + diphosphate. Functionally, DNA-dependent RNA polymerase catalyzes the transcription of DNA into RNA using the four ribonucleoside triphosphates as substrates. The protein is DNA-directed RNA polymerase subunit beta' of Buchnera aphidicola subsp. Schizaphis graminum (strain Sg).